Reading from the N-terminus, the 226-residue chain is 7-cyano-7-deazaguanine synthase (226 aa).

Residue 7-17 participates in ATP binding; the sequence is ISGGMDSLVTT. Zn(2+) contacts are provided by Cys-187, Cys-195, Cys-198, and Cys-201.

Belongs to the QueC family. Requires Zn(2+) as cofactor.

The enzyme catalyses 7-carboxy-7-deazaguanine + NH4(+) + ATP = 7-cyano-7-deazaguanine + ADP + phosphate + H2O + H(+). It participates in purine metabolism; 7-cyano-7-deazaguanine biosynthesis. Catalyzes the ATP-dependent conversion of 7-carboxy-7-deazaguanine (CDG) to 7-cyano-7-deazaguanine (preQ(0)). The protein is 7-cyano-7-deazaguanine synthase of Chlorobium limicola (strain DSM 245 / NBRC 103803 / 6330).